We begin with the raw amino-acid sequence, 477 residues long: RTX-I toxin determinant D (477 aa).

The Cytoplasmic segment spans residues 1–59; the sequence is MKTWLMGLYEFFQAYKTVWTEIWKIRHQLDTPDREKDENEFLPAHLELIETPVSKKPRL. Residues 60-80 form a helical membrane-spanning segment; that stretch reads IAYLIMLFLFLALVISIVSHV. Over 81 to 477 the chain is Periplasmic; sequence EIVATATGKL…ESVSESLRER (397 aa).

The protein belongs to the membrane fusion protein (MFP) (TC 8.A.1) family.

The protein localises to the cell inner membrane. Involved in the transport of the toxin RTX-I as well as that of RTX-II. In Actinobacillus pleuropneumoniae (Haemophilus pleuropneumoniae), this protein is RTX-I toxin determinant D (apxID).